The primary structure comprises 151 residues: MQQSVIEVQQAPFDQHAIYQWLSEPHSVGATTIFVGKVREMNLGDNVSGLYLEHYPAMTKKALQEIVNQARQRWELQRIAVIHRIGQLHTGDEIVLVGVSSAHRGDAYLANEFIMDYLKTKAPFWKRETTAEGERWIESRESDEQQLEKWR.

Residues 37-39 (KVR), 103-104 (HR), K119, and 126-128 (KRE) each bind substrate.

The protein belongs to the MoaE family. Heterotetramer of 2 MoaD subunits and 2 MoaE subunits. Also stable as homodimer. The enzyme changes between these two forms during catalysis.

The catalysed reaction is 2 [molybdopterin-synthase sulfur-carrier protein]-C-terminal-Gly-aminoethanethioate + cyclic pyranopterin phosphate + H2O = molybdopterin + 2 [molybdopterin-synthase sulfur-carrier protein]-C-terminal Gly-Gly + 2 H(+). It functions in the pathway cofactor biosynthesis; molybdopterin biosynthesis. Functionally, converts molybdopterin precursor Z into molybdopterin. This requires the incorporation of two sulfur atoms into precursor Z to generate a dithiolene group. The sulfur is provided by MoaD. The polypeptide is Molybdopterin synthase catalytic subunit (moaE) (Haemophilus ducreyi (strain 35000HP / ATCC 700724)).